We begin with the raw amino-acid sequence, 261 residues long: Cytochrome c oxidase subunit 3 (261 aa).

Topologically, residues 1–15 are mitochondrial matrix; it reads MTHQTHAYHMVNPSP. A helical transmembrane segment spans residues 16 to 34; sequence WPLTGALSALLMTSGLAMW. Residues 35–40 lie on the Mitochondrial intermembrane side of the membrane; it reads FHFNST. The chain crosses the membrane as a helical span at residues 41 to 66; the sequence is ILLMIGLTTNTLTMYQWWRDVIREST. The Mitochondrial matrix portion of the chain corresponds to 67–72; sequence FQGHHT. Residues 73–105 traverse the membrane as a helical segment; it reads PTVQKGLRYGMILFIISEVLFFTGFFWAFYHSS. The Mitochondrial intermembrane portion of the chain corresponds to 106–128; sequence LAPTPELGGCWPPTGIHPLNPLE. The helical transmembrane segment at 129–152 threads the bilayer; that stretch reads VPLLNTSVLLASGVSITWAHHSLM. Residues 153–155 lie on the Mitochondrial matrix side of the membrane; that stretch reads EGN. A helical transmembrane segment spans residues 156-183; sequence RYPMLQALFITIALGVYFTLLQASEYYE. At 184–190 the chain is on the mitochondrial intermembrane side; that stretch reads APFTISD. Residues 191–223 form a helical membrane-spanning segment; sequence GVYGSTFFVATGFHGLHVIIGSTFLIVCFFRQL. At 224–232 the chain is on the mitochondrial matrix side; it reads KFHFTSNHH. A helical membrane pass occupies residues 233–256; the sequence is FGFEAAAWYWHFVDVVWLFLYVSI. At 257 to 261 the chain is on the mitochondrial intermembrane side; the sequence is YWWGS.

Belongs to the cytochrome c oxidase subunit 3 family. As to quaternary structure, component of the cytochrome c oxidase (complex IV, CIV), a multisubunit enzyme composed of 14 subunits. The complex is composed of a catalytic core of 3 subunits MT-CO1, MT-CO2 and MT-CO3, encoded in the mitochondrial DNA, and 11 supernumerary subunits COX4I, COX5A, COX5B, COX6A, COX6B, COX6C, COX7A, COX7B, COX7C, COX8 and NDUFA4, which are encoded in the nuclear genome. The complex exists as a monomer or a dimer and forms supercomplexes (SCs) in the inner mitochondrial membrane with NADH-ubiquinone oxidoreductase (complex I, CI) and ubiquinol-cytochrome c oxidoreductase (cytochrome b-c1 complex, complex III, CIII), resulting in different assemblies (supercomplex SCI(1)III(2)IV(1) and megacomplex MCI(2)III(2)IV(2)).

It is found in the mitochondrion inner membrane. It catalyses the reaction 4 Fe(II)-[cytochrome c] + O2 + 8 H(+)(in) = 4 Fe(III)-[cytochrome c] + 2 H2O + 4 H(+)(out). In terms of biological role, component of the cytochrome c oxidase, the last enzyme in the mitochondrial electron transport chain which drives oxidative phosphorylation. The respiratory chain contains 3 multisubunit complexes succinate dehydrogenase (complex II, CII), ubiquinol-cytochrome c oxidoreductase (cytochrome b-c1 complex, complex III, CIII) and cytochrome c oxidase (complex IV, CIV), that cooperate to transfer electrons derived from NADH and succinate to molecular oxygen, creating an electrochemical gradient over the inner membrane that drives transmembrane transport and the ATP synthase. Cytochrome c oxidase is the component of the respiratory chain that catalyzes the reduction of oxygen to water. Electrons originating from reduced cytochrome c in the intermembrane space (IMS) are transferred via the dinuclear copper A center (CU(A)) of subunit 2 and heme A of subunit 1 to the active site in subunit 1, a binuclear center (BNC) formed by heme A3 and copper B (CU(B)). The BNC reduces molecular oxygen to 2 water molecules using 4 electrons from cytochrome c in the IMS and 4 protons from the mitochondrial matrix. This is Cytochrome c oxidase subunit 3 (MT-CO3) from Raphicerus campestris (Steenbok).